The sequence spans 200 residues: Protein GrpE (200 aa).

The segment covering methionine 1–threonine 10 has biased composition (basic and acidic residues). The segment at methionine 1 to aspartate 57 is disordered. Positions methionine 11–serine 29 are enriched in acidic residues.

Belongs to the GrpE family. As to quaternary structure, homodimer.

It is found in the cytoplasm. Its function is as follows. Participates actively in the response to hyperosmotic and heat shock by preventing the aggregation of stress-denatured proteins, in association with DnaK and GrpE. It is the nucleotide exchange factor for DnaK and may function as a thermosensor. Unfolded proteins bind initially to DnaJ; upon interaction with the DnaJ-bound protein, DnaK hydrolyzes its bound ATP, resulting in the formation of a stable complex. GrpE releases ADP from DnaK; ATP binding to DnaK triggers the release of the substrate protein, thus completing the reaction cycle. Several rounds of ATP-dependent interactions between DnaJ, DnaK and GrpE are required for fully efficient folding. The sequence is that of Protein GrpE from Clostridium acetobutylicum (strain ATCC 824 / DSM 792 / JCM 1419 / IAM 19013 / LMG 5710 / NBRC 13948 / NRRL B-527 / VKM B-1787 / 2291 / W).